The primary structure comprises 122 residues: Large ribosomal subunit protein uL14c (122 aa).

The protein belongs to the universal ribosomal protein uL14 family. As to quaternary structure, part of the 50S ribosomal subunit.

The protein resides in the plastid. It is found in the chloroplast. In terms of biological role, binds to 23S rRNA. This Calycanthus floridus var. glaucus (Eastern sweetshrub) protein is Large ribosomal subunit protein uL14c.